A 379-amino-acid polypeptide reads, in one-letter code: Alanine racemase (379 aa).

Lys41 functions as the Proton acceptor; specific for D-alanine in the catalytic mechanism. At Lys41 the chain carries N6-(pyridoxal phosphate)lysine. Residue Arg138 coordinates substrate. Tyr260 functions as the Proton acceptor; specific for L-alanine in the catalytic mechanism. Met319 contributes to the substrate binding site.

It belongs to the alanine racemase family. The cofactor is pyridoxal 5'-phosphate.

The enzyme catalyses L-alanine = D-alanine. It functions in the pathway amino-acid biosynthesis; D-alanine biosynthesis; D-alanine from L-alanine: step 1/1. Catalyzes the interconversion of L-alanine and D-alanine. May also act on other amino acids. In Rhizobium meliloti (strain 1021) (Ensifer meliloti), this protein is Alanine racemase (alr).